Consider the following 404-residue polypeptide: CD209 antigen (404 aa).

The Cytoplasmic portion of the chain corresponds to 1–37 (MSDSKEPSVQQLGLLEEEQLRGLGFRQTRGYKSLAGC). Short sequence motifs (endocytosis signal) lie at residues 14-15 (LL), 16-18 (EEE), and 31-34 (YKSL). A helical; Signal-anchor for type II membrane protein transmembrane segment spans residues 38 to 58 (LGHGALVLQLLSFTLLAGLLI). At 59–404 (QVSKFPSSIS…APATPNPPPA (346 aa)) the chain is on the extracellular side. Asn-80 carries N-linked (GlcNAc...) asparagine glycosylation. 7 repeat units span residues 96–118 (KLQE…PEKS), 119–141 (KQQE…PEKS), 142–164 (KQQE…PEKS), 165–187 (KQQE…PEKS), 188–210 (QQQE…PEKS), 211–233 (KQQE…PEKS), and 234–257 (KQQE…RPCP). Positions 96–257 (KLQEIYQELT…AVERLCRPCP (162 aa)) are 7 X approximate tandem repeats. Disulfide bonds link Cys-256-Cys-267, Cys-284-Cys-377, and Cys-356-Cys-369. The 116-residue stretch at 263-378 (FQGNCYFMSN…CNLAKFWICK (116 aa)) folds into the C-type lectin domain. Ca(2+)-binding residues include Glu-347, Asn-349, Val-351, Glu-354, Asn-365, and Asp-366.

As to quaternary structure, homotetramer. Interacts with C1QBP; the interaction is indicative for a C1q:C1QBP:CD209 signaling complex. Interacts with ICAM2 and ICAM3 by binding to mannose-like carbohydrates. Interacts (via C-type lectin domain) with CEACAM1 (via Lewis X moieties); this interaction is regulated by the glycosylation pattern of CEACAM1 on cell types and regulates contact between dendritic cells and neutrophils.

The protein localises to the membrane. Functionally, pathogen-recognition receptor expressed on the surface of immature dendritic cells (DCs) and involved in initiation of primary immune response. Thought to mediate the endocytosis of pathogens which are subsequently degraded in lysosomal compartments. The receptor returns to the cell membrane surface and the pathogen-derived antigens are presented to resting T-cells via MHC class II proteins to initiate the adaptive immune response. Probably recognizes in a calcium-dependent manner high mannose N-linked oligosaccharides in a variety of pathogen antigens. Its function is as follows. On DCs it is a high affinity receptor for ICAM2 and ICAM3 by binding to mannose-like carbohydrates. May act as a DC rolling receptor that mediates transendothelial migration of DC presursors from blood to tissues by binding endothelial ICAM2. Seems to regulate DC-induced T-cell proliferation by binding to ICAM3 on T-cells in the immunological synapse formed between DC and T-cells. The chain is CD209 antigen (CD209) from Nomascus concolor (Black crested gibbon).